The following is a 116-amino-acid chain: Ribonuclease P protein component (116 aa).

It belongs to the RnpA family. Consists of a catalytic RNA component (M1 or rnpB) and a protein subunit.

It carries out the reaction Endonucleolytic cleavage of RNA, removing 5'-extranucleotides from tRNA precursor.. Functionally, RNaseP catalyzes the removal of the 5'-leader sequence from pre-tRNA to produce the mature 5'-terminus. It can also cleave other RNA substrates such as 4.5S RNA. The protein component plays an auxiliary but essential role in vivo by binding to the 5'-leader sequence and broadening the substrate specificity of the ribozyme. The chain is Ribonuclease P protein component from Pseudanabaena sp. (strain PCC 6903).